Consider the following 321-residue polypeptide: Probable cell division protein WhiA (321 aa).

The H-T-H motif DNA-binding region spans 275 to 308 (SLDELGRLADPPMTKDAVAGRIRRLLAMADKRAA).

Belongs to the WhiA family.

Its function is as follows. Involved in cell division and chromosome segregation. The polypeptide is Probable cell division protein WhiA (Micrococcus luteus (strain ATCC 4698 / DSM 20030 / JCM 1464 / CCM 169 / CCUG 5858 / IAM 1056 / NBRC 3333 / NCIMB 9278 / NCTC 2665 / VKM Ac-2230) (Micrococcus lysodeikticus)).